We begin with the raw amino-acid sequence, 243 residues long: Arginine transport ATP-binding protein ArtP (243 aa).

The 240-residue stretch at 3–242 (IRVKNLNFFY…KTEQFKHYLS (240 aa)) folds into the ABC transporter domain. ATP is bound at residue 35 to 42 (GPSGAGKS).

This sequence belongs to the ABC transporter superfamily. In terms of assembly, the complex is composed of two ATP-binding proteins (ArtP), two transmembrane proteins (ArtM and ArtQ) and a solute-binding protein (ArtI).

The protein resides in the cell inner membrane. It carries out the reaction a polar amino acid(out) + ATP + H2O = a polar amino acid(in) + ADP + phosphate + H(+). It catalyses the reaction L-arginine(out) + ATP + H2O = L-arginine(in) + ADP + phosphate + H(+). Functionally, part of the ABC transporter complex ArtPIQM involved in arginine transport. Probably responsible for energy coupling to the transport system. This chain is Arginine transport ATP-binding protein ArtP (artP), found in Haemophilus influenzae (strain ATCC 51907 / DSM 11121 / KW20 / Rd).